The sequence spans 275 residues: Putative phosphoenolpyruvate synthase regulatory protein (275 aa).

157–164 (GVSRCGKT) lines the ADP pocket.

Belongs to the pyruvate, phosphate/water dikinase regulatory protein family. PSRP subfamily.

The enzyme catalyses [pyruvate, water dikinase] + ADP = [pyruvate, water dikinase]-phosphate + AMP + H(+). It catalyses the reaction [pyruvate, water dikinase]-phosphate + phosphate + H(+) = [pyruvate, water dikinase] + diphosphate. In terms of biological role, bifunctional serine/threonine kinase and phosphorylase involved in the regulation of the phosphoenolpyruvate synthase (PEPS) by catalyzing its phosphorylation/dephosphorylation. This Bordetella bronchiseptica (strain ATCC BAA-588 / NCTC 13252 / RB50) (Alcaligenes bronchisepticus) protein is Putative phosphoenolpyruvate synthase regulatory protein.